The chain runs to 56 residues: Per os infectivity factor AC110 (56 aa).

Its function is as follows. Plays an essential role in the process of oral infection. May participate in the crossing of occlusion-derived virions through the host peritrophic membrane during oral infection. This chain is Per os infectivity factor AC110, found in Autographa californica nuclear polyhedrosis virus (AcMNPV).